The chain runs to 875 residues: Probable ATP-dependent RNA helicase DDX10 (875 aa).

Residues Met-1 to Lys-43 are disordered. Position 4 is a phosphothreonine (Thr-4). Ser-7 carries the phosphoserine modification. Positions Asn-21–Leu-41 are enriched in basic residues. Residues Thr-69 to Lys-97 carry the Q motif motif. Residues Tyr-89–Leu-91, Gln-96, and Ala-113–Thr-120 each bind ATP. Residues Ile-100–Val-274 enclose the Helicase ATP-binding domain. Positions Asp-222–Asp-225 match the DEAD box motif. The Helicase C-terminal domain occupies Thr-287–Ile-448. Position 539 is a phosphoserine (Ser-539). Residue Lys-555 is modified to N6-acetyllysine. The disordered stretch occupies residues Gly-562–Glu-631. The span at Lys-564–Asn-575 shows a compositional bias: basic and acidic residues. Thr-577 bears the Phosphothreonine mark. Residues Thr-577–Glu-593 show a composition bias toward acidic residues. A compositionally biased stretch (polar residues) spans Gln-603–Ala-613. Lys-649 is covalently cross-linked (Glycyl lysine isopeptide (Lys-Gly) (interchain with G-Cter in SUMO2)). Residues Met-703–Thr-850 are disordered. Residues Glu-727–Arg-741 show a composition bias toward basic and acidic residues. Positions Lys-742 to Lys-751 are enriched in basic residues. Over residues Arg-752–Asp-771 the composition is skewed to basic and acidic residues. The span at Glu-772–Phe-790 shows a compositional bias: acidic residues. Ser-780 is subject to Phosphoserine. A compositionally biased stretch (basic and acidic residues) spans Met-812 to Lys-821. Ser-831 bears the Phosphoserine mark.

This sequence belongs to the DEAD box helicase family. DDX10/DBP4 subfamily. In terms of assembly, interacts with AIM2; this interaction promotes AIM2 stability. Interacts with SCNA; this interaction causes DDX10 mislocalization to the nucleoplasm and cytoplasmic inclusions. In terms of tissue distribution, high in testis but widely expressed.

It localises to the cytoplasm. Its subcellular location is the nucleus. It is found in the nucleolus. It catalyses the reaction ATP + H2O = ADP + phosphate + H(+). Its function is as follows. Putative ATP-dependent RNA helicase that plays various role in innate immunity or inflammation. Plays a role in the enhancement of AIM2-induced inflammasome activation by interacting with AIM2 and stabilizing its protein level. Negatively regulates viral infection by promoting interferon beta production and interferon stimulated genes/ISGs expression. This Homo sapiens (Human) protein is Probable ATP-dependent RNA helicase DDX10 (DDX10).